The sequence spans 125 residues: Fluoride-specific ion channel FluC (125 aa).

The next 4 membrane-spanning stretches (helical) occupy residues 2–22 (WLSI…RTGF), 35–55 (LGTL…LAFF), 68–88 (LIIT…AEVV), and 98–118 (WALG…LLGI). The Na(+) site is built by Gly-75 and Thr-78.

It belongs to the fluoride channel Fluc/FEX (TC 1.A.43) family.

The protein resides in the cell inner membrane. It carries out the reaction fluoride(in) = fluoride(out). With respect to regulation, na(+) is not transported, but it plays an essential structural role and its presence is essential for fluoride channel function. Its function is as follows. Fluoride-specific ion channel. Important for reducing fluoride concentration in the cell, thus reducing its toxicity. The protein is Fluoride-specific ion channel FluC of Polynucleobacter asymbioticus (strain DSM 18221 / CIP 109841 / QLW-P1DMWA-1) (Polynucleobacter necessarius subsp. asymbioticus).